A 3616-amino-acid polypeptide reads, in one-letter code: Replicase polyprotein 1ab (3616 aa).

Residues 8–28 (CLCTPNARVFWEHGQVYCTRC) form a C4-type; atypical zinc finger. The 113-residue stretch at 69 to 181 (ECRPGGLCWL…KGLCPFSDAR (113 aa)) folds into the Peptidase C31 domain. Catalysis depends on for Nsp1-alpha papain-like cysteine proteinase activity residues cysteine 76 and histidine 147. The region spanning 262–381 (NDTKFSKCWE…FRFQTRKYYG (120 aa)) is the Peptidase C32 domain. Catalysis depends on for Nsp1-beta papain-like cysteine proteinase activity residues cysteine 269 and histidine 340. In terms of domain architecture, Peptidase C33 spans 381–486 (GYSPPGDGAC…RGVCGGECKF (106 aa)). Residues cysteine 390 and histidine 456 each act as for Nsp2 cysteine proteinase activity in the active site. Disordered regions lie at residues 672–706 (SRAL…REVP) and 883–912 (PLKS…GAPR). Basic residues predominate over residues 676-690 (KSAKPKRKRNKKKKT). Positions 903–912 (DQLSQDGAPR) are enriched in polar residues. The next 9 membrane-spanning stretches (helical) occupy residues 942–962 (WLNH…SVVL), 977–997 (LFCL…FIPL), 1010–1030 (LSVF…VLPE), 1060–1080 (HIGV…VGGP), 1085–1105 (FYFL…AVAL), 1289–1309 (VADF…SAWL), 1364–1384 (ALMI…SLLV), 1386–1406 (VICV…VIAF), and 1425–1445 (VQFF…VILI). The HD1 stretch occupies residues 981-1105 (CCVLLCFHFP…LGLVFLAVAL (125 aa)). Residues 1289–1448 (VADFVCLGLY…AVAVILISSW (160 aa)) are HD2. In terms of domain architecture, Peptidase S32 spans 1513–1714 (GSLRTRGCAK…AVVESLPTPE (202 aa)). Active-site charge relay system; for 3C-like serine proteinase activity residues include histidine 1551, aspartate 1576, and serine 1628. A run of 4 helical transmembrane segments spans residues 1715-1735 (GALS…LIHV), 1737-1757 (FVPV…VVLA), 1761-1781 (FSFA…VLLL), and 1832-1852 (SKEI…LSLF). The interval 1737–1852 (FVPVIAVAFF…HVLALLLSLF (116 aa)) is HD3. Residues 2194 to 2352 (SLNGLQQSSA…LPYKLHPVRG (159 aa)) enclose the NiRAN domain. The region spanning 2590–2724 (GRCLEADLAS…YNESDELPNY (135 aa)) is the RdRp catalytic domain. An AV ZBD domain is found at 2844–2907 (KKKCRTCAHC…SSAMNLNTEL (64 aa)). Residues cysteine 2850, cysteine 2853, cysteine 2863, cysteine 2868, histidine 2871, histidine 2873, histidine 2875, histidine 2877, cysteine 2884, histidine 2886, cysteine 2893, and cysteine 2896 each coordinate Zn(2+). A (+)RNA virus helicase ATP-binding domain is found at 2964-3116 (QVMKVAQTCA…AFSLMPGRQL (153 aa)). Residue 2992–2999 (GAPGTGKT) participates in ATP binding. A (+)RNA virus helicase C-terminal domain is found at 3117–3248 (IEVFRFGPAV…CGDQPKMIVG (132 aa)). In terms of domain architecture, AV-Nsp11N/CoV-Nsp15M spans 3272-3368 (EGTASPLPQV…LTKYLKGESV (97 aa)). Positions 3370 to 3492 (LPDSIMSTGR…MVWKDATAYF (123 aa)) constitute a NendoU domain.

It belongs to the arteriviridae polyprotein family. Specific enzymatic cleavages in vivo by its own proteases yield mature proteins. There are two alternative pathways for processing. Either nsp4-5 is cleaved, which represents the major pathway or the nsp5-6 and nsp6-7 are processed, which represents the minor pathway. The major pathway occurs when nsp2 acts as a cofactor for nsp4.

It localises to the host membrane. The protein localises to the host cytoplasm. The protein resides in the host perinuclear region. The enzyme catalyses RNA(n) + a ribonucleoside 5'-triphosphate = RNA(n+1) + diphosphate. It carries out the reaction ATP + H2O = ADP + phosphate + H(+). The catalysed reaction is uridylyl-uridylyl-ribonucleotide-RNA = a 3'-end uridylyl-2',3'-cyclophospho-uridine-RNA + a 5'-end dephospho-ribonucleoside-RNA. Functionally, the replicase polyprotein 1ab is a multifunctional protein: it contains the activities necessary for the transcription of negative stranded RNA, leader RNA, subgenomic mRNAs and progeny virion RNA as well as proteinases responsible for the cleavage of the polyprotein into functional products. The Nsp1 chain is essential for viral subgenomic mRNA synthesis. Its function is as follows. The 3C-like serine proteinase chain is responsible for the majority of cleavages as it cleaves the C-terminus of the polyprotein. In terms of biological role, the helicase chain, which contains a zinc finger structure, displays RNA and DNA duplex-unwinding activities with 5' to 3' polarity. Functionally, plays a role in viral transcription/replication and prevents the simultaneous activation of host cell dsRNA sensors, such as MDA5/IFIH1, OAS, and PKR. Acts by degrading the 5'-polyuridines generated during replication of the poly(A) region of viral genomic and subgenomic RNAs. Catalyzes a two-step reaction in which a 2'3'-cyclic phosphate (2'3'-cP) is first generated by 2'-O transesterification, which is then hydrolyzed to a 3'-phosphate (3'-P). If not degraded, poly(U) RNA would hybridize with poly(A) RNA tails and activate host dsRNA sensors. The sequence is that of Replicase polyprotein 1ab (rep) from Mus musculus domesticus (western European house mouse).